Here is a 362-residue protein sequence, read N- to C-terminus: 3-dehydroquinate synthase (362 aa).

Residues 71–76 (DGEQYK), 105–109 (GVVGD), 129–130 (TT), Lys-142, Lys-151, and 169–172 (CLKT) contribute to the NAD(+) site. Glu-184, His-247, and His-264 together coordinate Zn(2+).

Belongs to the sugar phosphate cyclases superfamily. Dehydroquinate synthase family. Co(2+) is required as a cofactor. The cofactor is Zn(2+). NAD(+) serves as cofactor.

It is found in the cytoplasm. The catalysed reaction is 7-phospho-2-dehydro-3-deoxy-D-arabino-heptonate = 3-dehydroquinate + phosphate. Its pathway is metabolic intermediate biosynthesis; chorismate biosynthesis; chorismate from D-erythrose 4-phosphate and phosphoenolpyruvate: step 2/7. Catalyzes the conversion of 3-deoxy-D-arabino-heptulosonate 7-phosphate (DAHP) to dehydroquinate (DHQ). The sequence is that of 3-dehydroquinate synthase from Escherichia coli (strain K12 / MC4100 / BW2952).